The primary structure comprises 171 residues: uncharacterized protein (171 aa).

It belongs to the HHV-5 UL128 protein family. As to quaternary structure, forms the envelope pentamer complex (PC) composed of gH, gL, UL128, UL130, and UL131A. The pentamer interacts with host NRP2.

Its subcellular location is the virion membrane. Plays a role in viral entry into host cells. Forms a pentameric complex at the surface of the viral envelope together with gH, gL, UL130 and UL131. This complex is required for entry in epithelial, endothelial and myeloid host cells. Mechanistically, engages host receptor(s) including neurophilin 2/NRP2 to mediate infection. Additionally, monomeric UL128 may interfere with certain inflammatory cytokines to increase infection and dissemination by blocking monocytes migration. This is an uncharacterized protein from Human cytomegalovirus (strain AD169) (HHV-5).